The chain runs to 66 residues: MAVPKKKTSKSKRNMRRSHLALGKVNVIVDSQTGEYKLPHHVSLVDGTYNNRQVVTKKIETAEEVA.

The protein belongs to the bacterial ribosomal protein bL32 family.

This is Large ribosomal subunit protein bL32 from Rickettsia canadensis (strain McKiel).